The following is a 179-amino-acid chain: Natural killer cells antigen CD94 (179 aa).

At 1–10 (MAVSQTTLWN) the chain is on the cytoplasmic side. The chain crosses the membrane as a helical; Signal-anchor for type II membrane protein span at residues 11–31 (LISGILGVICLLLMTTMGILL). Over 32–179 (KNLLLTESIQ…SRFICKQELM (148 aa)) the chain is Extracellular. 4 disulfides stabilise this stretch: C58–C70, C61–C72, C89–C174, and C152–C166. A C-type lectin domain is found at 68–175 (HQCNCYLFFD…CEDKSRFICK (108 aa)). N93 and N125 each carry an N-linked (GlcNAc...) asparagine glycan.

Can form disulfide-bonded heterodimer with NKG2 family members KLRC1 and KLRC2. KLRD1-KLRC1 heterodimer interacts with peptide-bound MHC-E-B2M heterotrimeric complex. KLRD1 plays a prominent role in directly interacting with MHC-E. KLRD1-KLRC1 interacts with much higher affinity with peptide-bound MHC-E-B2M than KLRD1-KLRC2. Interacts with the adapter protein TYROBP/DAP12; this interaction is required for cell surface expression and cell activation.

The protein localises to the cell membrane. Immune receptor involved in self-nonself discrimination. In complex with KLRC1 or KLRC2 on cytotoxic and regulatory lymphocyte subsets, recognizes non-classical major histocompatibility (MHC) class Ib molecule MHC-E loaded with self-peptides derived from the signal sequence of classical MHC class Ia and non-classical MHC class Ib molecules. Enables cytotoxic cells to monitor the expression of MHC class I molecules in healthy cells and to tolerate self. Primarily functions as a ligand binding subunit as it lacks the capacity to signal. Its function is as follows. KLRD1-KLRC1 acts as an immune inhibitory receptor. Key inhibitory receptor on natural killer (NK) cells that regulates their activation and effector functions. Dominantly counteracts T cell receptor signaling on a subset of memory/effector CD8-positive T cells as part of an antigen-driven response to avoid autoimmunity. On intraepithelial CD8-positive gamma-delta regulatory T cells triggers TGFB1 secretion, which in turn limits the cytotoxic programming of intraepithelial CD8-positive alpha-beta T cells, distinguishing harmless from pathogenic antigens. In MHC-E-rich tumor microenvironment, acts as an immune inhibitory checkpoint and may contribute to progressive loss of effector functions of NK cells and tumor-specific T cells, a state known as cell exhaustion. Upon MHC-E-peptide binding, transmits intracellular signals through KLRC1 immunoreceptor tyrosine-based inhibition motifs (ITIMs) by recruiting INPP5D/SHIP-1 and INPPL1/SHIP-2 tyrosine phosphatases to ITIMs, and ultimately opposing signals transmitted by activating receptors through dephosphorylation of proximal signaling molecules. In terms of biological role, KLRD1-KLRC2 acts as an immune activating receptor. On cytotoxic lymphocyte subsets recognizes MHC-E loaded with signal sequence-derived peptides from non-classical MHC class Ib MHC-G molecules, likely playing a role in the generation and effector functions of adaptive NK cells and in maternal-fetal tolerance during pregnancy. Regulates the effector functions of terminally differentiated cytotoxic lymphocyte subsets, and in particular may play a role in adaptive NK cell response to viral infection. Upon MHC-E-peptide binding, transmits intracellular signals via the adapter protein TYROBP/DAP12, triggering the phosphorylation of proximal signaling molecules and cell activation. The polypeptide is Natural killer cells antigen CD94 (KLRD1) (Canis lupus familiaris (Dog)).